A 215-amino-acid chain; its full sequence is ATP phosphoribosyltransferase (215 aa).

Belongs to the ATP phosphoribosyltransferase family. Short subfamily. In terms of assembly, heteromultimer composed of HisG and HisZ subunits.

The protein resides in the cytoplasm. It carries out the reaction 1-(5-phospho-beta-D-ribosyl)-ATP + diphosphate = 5-phospho-alpha-D-ribose 1-diphosphate + ATP. The protein operates within amino-acid biosynthesis; L-histidine biosynthesis; L-histidine from 5-phospho-alpha-D-ribose 1-diphosphate: step 1/9. Its function is as follows. Catalyzes the condensation of ATP and 5-phosphoribose 1-diphosphate to form N'-(5'-phosphoribosyl)-ATP (PR-ATP). Has a crucial role in the pathway because the rate of histidine biosynthesis seems to be controlled primarily by regulation of HisG enzymatic activity. In Prochlorococcus marinus subsp. pastoris (strain CCMP1986 / NIES-2087 / MED4), this protein is ATP phosphoribosyltransferase.